The chain runs to 75 residues: Protein SlyX homolog (75 aa).

The tract at residues 56-75 is disordered; sequence KNMDSSNMEDPANEPPPPHY.

The protein belongs to the SlyX family.

The polypeptide is Protein SlyX homolog (Vibrio parahaemolyticus serotype O3:K6 (strain RIMD 2210633)).